Consider the following 194-residue polypeptide: Imidazoleglycerol-phosphate dehydratase (194 aa).

It belongs to the imidazoleglycerol-phosphate dehydratase family.

The protein localises to the cytoplasm. The enzyme catalyses D-erythro-1-(imidazol-4-yl)glycerol 3-phosphate = 3-(imidazol-4-yl)-2-oxopropyl phosphate + H2O. It participates in amino-acid biosynthesis; L-histidine biosynthesis; L-histidine from 5-phospho-alpha-D-ribose 1-diphosphate: step 6/9. The polypeptide is Imidazoleglycerol-phosphate dehydratase (Bacillus subtilis (strain 168)).